The primary structure comprises 185 residues: MYLFINIIRRNFISKNNFPKANREIRAREVRLVGENGEMHGVVNIRKALDMAERASLDLVEISPNAVPPVCKILDFGKFKYESKKRLHEARKKQKIVVLKEMKFKPNISIGDFETKLRKIKEFLKDGDKVKISLWFKGREILHKEVGQELFKRIEVGLEGPIKIDQHAKMEGKQMIMIVSPDIKV.

This sequence belongs to the IF-3 family. In terms of assembly, monomer.

It is found in the cytoplasm. In terms of biological role, IF-3 binds to the 30S ribosomal subunit and shifts the equilibrium between 70S ribosomes and their 50S and 30S subunits in favor of the free subunits, thus enhancing the availability of 30S subunits on which protein synthesis initiation begins. The polypeptide is Translation initiation factor IF-3 (Rickettsia felis (strain ATCC VR-1525 / URRWXCal2) (Rickettsia azadi)).